A 432-amino-acid chain; its full sequence is Tyrosine--tRNA ligase (432 aa).

Position 35 (Tyr35) interacts with L-tyrosine. The 'HIGH' region motif lies at 40-49; sequence PTAGSLHVGH. L-tyrosine contacts are provided by Tyr175 and Gln179. The 'KMSKS' region signature appears at 239 to 243; the sequence is KFGKT. Residue Lys242 participates in ATP binding. Residues 365-422 form the S4 RNA-binding domain; that stretch reads PPLVDLFASTGLVPSKSAARRTIQEGGAYLNNAKVTDIEARVSEADLLHGRYLVLRRG.

It belongs to the class-I aminoacyl-tRNA synthetase family. TyrS type 1 subfamily. Homodimer.

The protein resides in the cytoplasm. It carries out the reaction tRNA(Tyr) + L-tyrosine + ATP = L-tyrosyl-tRNA(Tyr) + AMP + diphosphate + H(+). In terms of biological role, catalyzes the attachment of tyrosine to tRNA(Tyr) in a two-step reaction: tyrosine is first activated by ATP to form Tyr-AMP and then transferred to the acceptor end of tRNA(Tyr). This is Tyrosine--tRNA ligase from Thermobifida fusca (strain YX).